The primary structure comprises 81 residues: MKLGIKKVKMHVKKNDMVKVISGNDKGVSGKILRVFPEKNRVIVEGVNMRKRHMRPTQEYPQGAILEREMPIHASNVKKVS.

This sequence belongs to the universal ribosomal protein uL24 family. Part of the 50S ribosomal subunit.

Its function is as follows. One of two assembly initiator proteins, it binds directly to the 5'-end of the 23S rRNA, where it nucleates assembly of the 50S subunit. Functionally, one of the proteins that surrounds the polypeptide exit tunnel on the outside of the subunit. The chain is Large ribosomal subunit protein uL24 from Chloroherpeton thalassium (strain ATCC 35110 / GB-78).